The primary structure comprises 207 residues: Outer-membrane lipoprotein LolB (207 aa).

A signal peptide spans 1 to 21 (MPLPDFRLIRLLPLAALVLTA). Cysteine 22 is lipidated: N-palmitoyl cysteine. The S-diacylglycerol cysteine moiety is linked to residue cysteine 22.

This sequence belongs to the LolB family. As to quaternary structure, monomer.

It localises to the cell outer membrane. Functionally, plays a critical role in the incorporation of lipoproteins in the outer membrane after they are released by the LolA protein. In Shigella boydii serotype 18 (strain CDC 3083-94 / BS512), this protein is Outer-membrane lipoprotein LolB.